Here is a 1463-residue protein sequence, read N- to C-terminus: Alpha-agarase (1463 aa).

A signal peptide spans 1–27 (MITSSKKIVSAMLSTSLWIGVASAAYA). A propeptide spanning residues 28–684 (ETTNVEAEGY…PSTLSESIFT (657 aa)) is cleaved from the precursor. Disordered regions lie at residues 166 to 191 (VTPE…PGTP) and 512 to 549 (TDDI…PQPG). Polar residues predominate over residues 518–536 (CANTPSGETANATGCSSSQ). Positions 534–677 (SSQEGGGTDP…GGTNFVHPST (144 aa)) constitute a PA14 domain. The 132-residue stretch at 701-832 (IIVELESFVF…QWSGDRVRFT (132 aa)) folds into the CBM6 domain.

This sequence belongs to the glycosyl hydrolase 96 family. As to quaternary structure, monomer. Requires Ca(2+) as cofactor.

The catalysed reaction is Endohydrolysis of 1,3-alpha-L-galactosidic linkages in agarose, yielding agarotetraose as the major product.. Alpha-agarase. Hydrolyzes agarose, agarohexaose, neoagarohexaose and porphyran. Hydrolysis of porphyran by this enzyme improves its antioxidant activity. Does not hydrolyze kappa-carrageenan, iota-carrageenen or lambda-carrageenan. The polypeptide is Alpha-agarase (Thalassotalea agarivorans (Thalassomonas agarivorans)).